Reading from the N-terminus, the 481-residue chain is UDP-glucose 6-dehydrogenase 1 (481 aa).

NAD(+) is bound by residues 8 to 13, aspartate 33, arginine 38, 86 to 90, 127 to 128, and glutamate 162; these read GAGYVG, VNTPT, and ST. Residues 158-162, 217-224, and 257-270 each bind substrate; these read EFLAE, KLAANAFL, and RIGA…VGFG. Cysteine 273 (nucleophile) is an active-site residue. 273-276 is an NAD(+) binding site; it reads CFQK. Position 335–336 (335–336) interacts with substrate; it reads FK. Arginine 343 is an NAD(+) binding site. Serine 394 is modified (phosphoserine). Arginine 448 contacts substrate.

Belongs to the UDP-glucose/GDP-mannose dehydrogenase family.

It carries out the reaction UDP-alpha-D-glucose + 2 NAD(+) + H2O = UDP-alpha-D-glucuronate + 2 NADH + 3 H(+). The protein operates within nucleotide-sugar biosynthesis; UDP-alpha-D-glucuronate biosynthesis; UDP-alpha-D-glucuronate from UDP-alpha-D-glucose: step 1/1. Its function is as follows. Involved in the biosynthesis of UDP-glucuronic acid (UDP-GlcA), providing nucleotide sugars for cell-wall polymers. This Oryza sativa subsp. japonica (Rice) protein is UDP-glucose 6-dehydrogenase 1 (UGD1).